Reading from the N-terminus, the 333-residue chain is Tubulin alpha chain (333 aa).

GTP is bound by residues Ser48, Gly52, Thr53, Thr88, Asn115, and Asn137.

This sequence belongs to the tubulin family. As to quaternary structure, dimer of alpha and beta chains. A typical microtubule is a hollow water-filled tube with an outer diameter of 25 nm and an inner diameter of 15 nM. Alpha-beta heterodimers associate head-to-tail to form protofilaments running lengthwise along the microtubule wall with the beta-tubulin subunit facing the microtubule plus end conferring a structural polarity. Microtubules usually have 13 protofilaments but different protofilament numbers can be found in some organisms and specialized cells. Mg(2+) serves as cofactor. In terms of processing, undergoes a tyrosination/detyrosination cycle, the cyclic removal and re-addition of a C-terminal tyrosine residue by the enzymes tubulin tyrosine carboxypeptidase (TTCP) and tubulin tyrosine ligase (TTL), respectively.

Its subcellular location is the cytoplasm. The protein resides in the cytoskeleton. It catalyses the reaction GTP + H2O = GDP + phosphate + H(+). Functionally, tubulin is the major constituent of microtubules, a cylinder consisting of laterally associated linear protofilaments composed of alpha- and beta-tubulin heterodimers. Microtubules grow by the addition of GTP-tubulin dimers to the microtubule end, where a stabilizing cap forms. Below the cap, tubulin dimers are in GDP-bound state, owing to GTPase activity of alpha-tubulin. The sequence is that of Tubulin alpha chain (tuba) from Dictyostelium purpureum (Slime mold).